The following is a 269-amino-acid chain: Phosphatidylglycerol--prolipoprotein diacylglyceryl transferase (269 aa).

7 helical membrane passes run 17–37, 59–79, 95–115, 123–143, 181–201, 206–226, and 242–262; these read IGPI…MLGW, FLVW…VLFY, WQGG…IIAF, LFQV…FGRI, AGLE…LTGI, GALS…SEFF, and MGQL…AWAL. Residue Arg142 participates in a 1,2-diacyl-sn-glycero-3-phospho-(1'-sn-glycerol) binding.

The protein belongs to the Lgt family.

It is found in the cell inner membrane. It carries out the reaction L-cysteinyl-[prolipoprotein] + a 1,2-diacyl-sn-glycero-3-phospho-(1'-sn-glycerol) = an S-1,2-diacyl-sn-glyceryl-L-cysteinyl-[prolipoprotein] + sn-glycerol 1-phosphate + H(+). Its pathway is protein modification; lipoprotein biosynthesis (diacylglyceryl transfer). Functionally, catalyzes the transfer of the diacylglyceryl group from phosphatidylglycerol to the sulfhydryl group of the N-terminal cysteine of a prolipoprotein, the first step in the formation of mature lipoproteins. This Paramagnetospirillum magneticum (strain ATCC 700264 / AMB-1) (Magnetospirillum magneticum) protein is Phosphatidylglycerol--prolipoprotein diacylglyceryl transferase.